The primary structure comprises 130 residues: ATP synthase epsilon chain (130 aa).

It belongs to the ATPase epsilon chain family. As to quaternary structure, F-type ATPases have 2 components, CF(1) - the catalytic core - and CF(0) - the membrane proton channel. CF(1) has five subunits: alpha(3), beta(3), gamma(1), delta(1), epsilon(1). CF(0) has three main subunits: a, b and c.

Its subcellular location is the cell membrane. Functionally, produces ATP from ADP in the presence of a proton gradient across the membrane. In Nocardia farcinica (strain IFM 10152), this protein is ATP synthase epsilon chain.